The primary structure comprises 227 residues: uncharacterized protein (227 aa).

The signal sequence occupies residues 1–22; the sequence is MDSVMRKSLFLLLPLVVTNAHA.

This is an uncharacterized protein from Salmonella typhi.